A 792-amino-acid polypeptide reads, in one-letter code: uncharacterized protein (792 aa).

25 tandem repeats follow at residues 91-102 (NSSTNATTTASI), 103-114 (NVRTSATTTASI), 115-126 (NVRTSATTTEST), 127-138 (NSNTNATTTEST), 139-150 (NSSTNATTTASI), 151-162 (NVRTSATTTEST), 163-174 (NSSTNATTTASI), 175-186 (NVRTSATTTEST), 187-198 (NSSTNATTTASI), 199-210 (NVRTSATTTEST), 211-222 (NSNTNASTNATT), 223-234 (NSSTNATTTAST), 235-246 (NVRTSATTNATT), 247-258 (NSSTNATTTAST), 259-270 (NVRTSATTTAST), 271-282 (NVRTSATTTASI), 283-294 (NVRTSATTTESI), 295-306 (NSSTNATTTEST), 307-318 (NSNTSATTTEST), 319-330 (DSNTNATTTASI), 331-342 (NVRTSATTTEST), 343-354 (NSNTSATTTEST), 355-366 (DSNTSATTTAST), 367-378 (NSSTNATTTAST), and 379-390 (NSSTNATTTEST). Residues 91–390 (NSSTNATTTA…STNATTTEST (300 aa)) form a 25 X 12 AA tandem repeat of N-[SV]-[RS]-T-[NS]-A-T-T-T-[AE]-[ST]-[IT] region. Residues 113 to 417 (SINVRTSATT…RFHPVTDINK (305 aa)) form a disordered region. The span at 118-393 (TSATTTESTN…ATTTESTNAS (276 aa)) shows a compositional bias: low complexity. Residues 394-417 (AKEDANKDGNAEDNRFHPVTDINK) are compositionally biased toward basic and acidic residues.

This is an uncharacterized protein from Saccharomyces cerevisiae (strain ATCC 204508 / S288c) (Baker's yeast).